The following is a 446-amino-acid chain: ATP-dependent protease ATPase subunit HslU (446 aa).

Residues Ile18, 60–65, Asp259, Glu324, and Arg396 each bind ATP; that span reads GVGKTE.

It belongs to the ClpX chaperone family. HslU subfamily. A double ring-shaped homohexamer of HslV is capped on each side by a ring-shaped HslU homohexamer. The assembly of the HslU/HslV complex is dependent on binding of ATP.

Its subcellular location is the cytoplasm. ATPase subunit of a proteasome-like degradation complex; this subunit has chaperone activity. The binding of ATP and its subsequent hydrolysis by HslU are essential for unfolding of protein substrates subsequently hydrolyzed by HslV. HslU recognizes the N-terminal part of its protein substrates and unfolds these before they are guided to HslV for hydrolysis. The chain is ATP-dependent protease ATPase subunit HslU from Baumannia cicadellinicola subsp. Homalodisca coagulata.